The sequence spans 407 residues: FMN-dependent alpha-hydroxy acid dehydrogenase PB1A11.03 (407 aa).

In terms of domain architecture, FMN hydroxy acid dehydrogenase spans 28–406 (QRPQITVDGR…DLNRDVLYKE (379 aa)). Tyr-54 is a binding site for a 2-oxocarboxylate. 2 residues coordinate FMN: Ser-136 and Gln-158. Tyr-160 provides a ligand contact to a 2-oxocarboxylate. Position 188 (Thr-188) interacts with FMN. Arg-197 lines the a 2-oxocarboxylate pocket. FMN is bound at residue Lys-277. His-301 functions as the Proton acceptor in the catalytic mechanism. An a 2-oxocarboxylate-binding site is contributed by Arg-304. Residues 332–336 (DSGVR) and 355–356 (GR) contribute to the FMN site.

The protein belongs to the FMN-dependent alpha-hydroxy acid dehydrogenase family. It depends on FMN as a cofactor.

Its subcellular location is the cytoplasm. The protein resides in the nucleus. In Schizosaccharomyces pombe (strain 972 / ATCC 24843) (Fission yeast), this protein is FMN-dependent alpha-hydroxy acid dehydrogenase PB1A11.03.